The primary structure comprises 688 residues: Methionine--tRNA ligase (688 aa).

Residues 13-23 carry the 'HIGH' region motif; it reads PYANGPIHIGH. Positions 144, 147, 157, and 160 each coordinate Zn(2+). The 'KMSKS' region signature appears at 334-338; the sequence is KMSKS. K337 serves as a coordination point for ATP. Residues 582-688 form the tRNA-binding domain; it reads DFAKIDLRVA…AGAVPGMRVR (107 aa).

Belongs to the class-I aminoacyl-tRNA synthetase family. MetG type 1 subfamily. As to quaternary structure, homodimer. Zn(2+) is required as a cofactor.

It is found in the cytoplasm. The enzyme catalyses tRNA(Met) + L-methionine + ATP = L-methionyl-tRNA(Met) + AMP + diphosphate. Is required not only for elongation of protein synthesis but also for the initiation of all mRNA translation through initiator tRNA(fMet) aminoacylation. The chain is Methionine--tRNA ligase from Ralstonia nicotianae (strain ATCC BAA-1114 / GMI1000) (Ralstonia solanacearum).